Here is a 378-residue protein sequence, read N- to C-terminus: Glutamate 5-kinase (378 aa).

Lys-19 contributes to the ATP binding site. Substrate is bound by residues Ser-60, Asp-147, and Asn-159. Residues 179 to 180 and 221 to 227 each bind ATP; these read SD and SGGMRTK. Residues 285–362 form the PUA domain; that stretch reads KGTLTIDAGA…GEMEQLLGYR (78 aa).

The protein belongs to the glutamate 5-kinase family.

The protein localises to the cytoplasm. The catalysed reaction is L-glutamate + ATP = L-glutamyl 5-phosphate + ADP. It participates in amino-acid biosynthesis; L-proline biosynthesis; L-glutamate 5-semialdehyde from L-glutamate: step 1/2. Its function is as follows. Catalyzes the transfer of a phosphate group to glutamate to form L-glutamate 5-phosphate. In Gluconobacter oxydans (strain 621H) (Gluconobacter suboxydans), this protein is Glutamate 5-kinase.